The primary structure comprises 485 residues: Adenosylhomocysteinase (485 aa).

Residues T64, D139, and E205 each coordinate substrate. NAD(+) is bound at residue 206–208 (TTT). Substrate-binding residues include K235 and D239. NAD(+) contacts are provided by residues N240, 269-274 (GYGDVG), E292, N327, 348-350 (IGH), and N397.

The protein belongs to the adenosylhomocysteinase family. NAD(+) is required as a cofactor.

It catalyses the reaction S-adenosyl-L-homocysteine + H2O = L-homocysteine + adenosine. It participates in amino-acid biosynthesis; L-homocysteine biosynthesis; L-homocysteine from S-adenosyl-L-homocysteine: step 1/1. Functionally, adenosylhomocysteine is a competitive inhibitor of S-adenosyl-L-methionine-dependent methyl transferase reactions; therefore adenosylhomocysteinase may play a key role in the control of methylations via regulation of the intracellular concentration of adenosylhomocysteine. The sequence is that of Adenosylhomocysteinase (SAHH) from Nicotiana sylvestris (Wood tobacco).